Consider the following 380-residue polypeptide: uncharacterized protein (380 aa).

HTH tetR-type domains follow at residues 3-63 and 201-262; these read ESAE…KEGL and VRTR…CAEI. The segment at residues 225-244 is a DNA-binding region (H-T-H motif); sequence TISDITRKSNIRRATFYDHY.

This is an uncharacterized protein from Bacillus subtilis (strain 168).